Consider the following 154-residue polypeptide: Myoglobin (154 aa).

Residues 2–148 enclose the Globin domain; sequence GLSDGEWQLV…FRKDMASNYK (147 aa). At S4 the chain carries Phosphoserine. Nitrite is bound at residue H65. Residue H65 coordinates O2. Residue T68 is modified to Phosphothreonine. H94 is a heme b binding site.

It belongs to the globin family. Monomeric.

The protein localises to the cytoplasm. It localises to the sarcoplasm. It catalyses the reaction Fe(III)-heme b-[protein] + nitric oxide + H2O = Fe(II)-heme b-[protein] + nitrite + 2 H(+). The catalysed reaction is H2O2 + AH2 = A + 2 H2O. Functionally, monomeric heme protein which primary function is to store oxygen and facilitate its diffusion within muscle tissues. Reversibly binds oxygen through a pentacoordinated heme iron and enables its timely and efficient release as needed during periods of heightened demand. Depending on the oxidative conditions of tissues and cells, and in addition to its ability to bind oxygen, it also has a nitrite reductase activity whereby it regulates the production of bioactive nitric oxide. Under stress conditions, like hypoxia and anoxia, it also protects cells against reactive oxygen species thanks to its pseudoperoxidase activity. This chain is Myoglobin (MB), found in Gorilla gorilla beringei (Mountain gorilla).